A 215-amino-acid polypeptide reads, in one-letter code: Phosphatidylserine decarboxylase proenzyme (215 aa).

S183 (schiff-base intermediate with substrate; via pyruvic acid) is an active-site residue. S183 carries the post-translational modification Pyruvic acid (Ser); by autocatalysis.

Belongs to the phosphatidylserine decarboxylase family. PSD-A subfamily. In terms of assembly, heterodimer of a large membrane-associated beta subunit and a small pyruvoyl-containing alpha subunit. Requires pyruvate as cofactor. Is synthesized initially as an inactive proenzyme. Formation of the active enzyme involves a self-maturation process in which the active site pyruvoyl group is generated from an internal serine residue via an autocatalytic post-translational modification. Two non-identical subunits are generated from the proenzyme in this reaction, and the pyruvate is formed at the N-terminus of the alpha chain, which is derived from the carboxyl end of the proenzyme. The post-translation cleavage follows an unusual pathway, termed non-hydrolytic serinolysis, in which the side chain hydroxyl group of the serine supplies its oxygen atom to form the C-terminus of the beta chain, while the remainder of the serine residue undergoes an oxidative deamination to produce ammonia and the pyruvoyl prosthetic group on the alpha chain.

It localises to the cell membrane. The enzyme catalyses a 1,2-diacyl-sn-glycero-3-phospho-L-serine + H(+) = a 1,2-diacyl-sn-glycero-3-phosphoethanolamine + CO2. It participates in phospholipid metabolism; phosphatidylethanolamine biosynthesis; phosphatidylethanolamine from CDP-diacylglycerol: step 2/2. Its function is as follows. Catalyzes the formation of phosphatidylethanolamine (PtdEtn) from phosphatidylserine (PtdSer). The chain is Phosphatidylserine decarboxylase proenzyme from Symbiobacterium thermophilum (strain DSM 24528 / JCM 14929 / IAM 14863 / T).